Reading from the N-terminus, the 276-residue chain is UPF0276 protein PA4106 (276 aa).

Belongs to the UPF0276 family.

The chain is UPF0276 protein PA4106 from Pseudomonas aeruginosa (strain ATCC 15692 / DSM 22644 / CIP 104116 / JCM 14847 / LMG 12228 / 1C / PRS 101 / PAO1).